We begin with the raw amino-acid sequence, 537 residues long: MEAAPSEKVPAKKLSSSENLDIGVSEVVTVDAAENNSNGIKRGLKTRHVSMMALAGIIGPGVFIGMGSALHIGGPVGLIVGFAIVSIVVFGVMLSIGEFNSLFDFNFNTHAARWVDPAFGAAIGWNYVIVWLTNIAAEYTSLTSILQYWGPHVPSYGFFLIFWGFFTCYQMLGVSVFGESEYILAFIKLLFITGFYIFAIIYAAGGIPHHKPPNLFKEMPLAHGFGGIVSAFVYAGVFFSGVESVSMTAAESKNPKKAIPLAVRQTFWRILYVYFGISISYGITVAWNDPNLSSGSKTLKSPMTIAIMNAGWNHAGDFVNAVILITCLSSINSGIYIGSRSLYNLAKDGMAPKIFKRVDKRGVPWVAVHSVHLFGFLSIMNYSTGAVKAYGYIINLAGVSAFIVWTAIIFVHFRFRRGWVKQGYALSDLPFKSPLYPFPQLIGFVIGIILTLVQGWTVFKPFAAGDFVDAYILLPLFFVIWLSYKFIKKTKWVSYEDMDFINGRRVIEPTYSNEQSSDKETEDGKKTSFWNRVWKEV.

The next 10 helical transmembrane spans lie at 52-72, 76-96, 157-177, 183-203, 219-239, 267-287, 318-338, 362-382, 393-413, and 462-482; these read MALA…ALHI, VGLI…MLSI, GFFL…VSVF, ILAF…IIYA, MPLA…GVFF, FWRI…TVAW, FVNA…IYIG, GVPW…IMNY, IINL…FVHF, and FAAG…VIWL.

Belongs to the amino acid-polyamine-organocation (APC) superfamily.

The protein resides in the membrane. This is an uncharacterized protein from Schizosaccharomyces pombe (strain 972 / ATCC 24843) (Fission yeast).